The sequence spans 204 residues: Ribosomal RNA small subunit methyltransferase G (204 aa).

Gly73, Phe78, and Arg139 together coordinate S-adenosyl-L-methionine.

This sequence belongs to the methyltransferase superfamily. RNA methyltransferase RsmG family.

It localises to the cytoplasm. The catalysed reaction is guanosine(527) in 16S rRNA + S-adenosyl-L-methionine = N(7)-methylguanosine(527) in 16S rRNA + S-adenosyl-L-homocysteine. Functionally, specifically methylates the N7 position of guanine in position 527 of 16S rRNA. The chain is Ribosomal RNA small subunit methyltransferase G from Coxiella burnetii (strain CbuG_Q212) (Coxiella burnetii (strain Q212)).